The chain runs to 404 residues: MREVPHVLGIVLAGGEGKRLYPLTADRAKPAVPFGGAYRLIDFVLSNLVNARYLRICVLTQYKSHSLDRHISQNWRLSGLAGEYITPVPAQQRLGPRWYTGSADAIYQSLNLIYDEDPDYIVVFGADHVYRMDPEQMVRFHIDSGAGATVAGIRVPRENATAFGCIDADDSGRIRSFVEKPLEPPGTPDDPDTTFVSMGNYIFTTKVLIDAIRADADDDHSDHDMGGDIVPRLVADGMAAVYDFSDNEVPGATDRDRAYWRDVGTLDAFYDAHMDLVSVHPVFNLYNKRWPIRGESENLAPAKFVNGGSAQESVVGAGSIISAASVRNSVLSSNVVVDDGAIVEGSVIMPGTRVGRGAVVRHAILDKNVVVGPGEMVGVDLEKDRERFAISAGGVVAVGKGVWI.

Residues tyrosine 99, glycine 164, 179–180, and serine 197 each bind alpha-D-glucose 1-phosphate; that span reads EK.

This sequence belongs to the bacterial/plant glucose-1-phosphate adenylyltransferase family.

The catalysed reaction is alpha-D-glucose 1-phosphate + ATP + H(+) = ADP-alpha-D-glucose + diphosphate. It functions in the pathway capsule biogenesis; capsule polysaccharide biosynthesis. It participates in glycan biosynthesis; glycogen biosynthesis. Involved in the biosynthesis of ADP-glucose, a building block, required in the biosynthesis of maltose-1-phosphate (M1P) and in the elongation reactions to produce linear alpha-1,4-glucans. Catalyzes the reaction between ATP and alpha-D-glucose 1-phosphate (G1P) to produce pyrophosphate and ADP-Glc. This is Glucose-1-phosphate adenylyltransferase from Mycobacterium bovis (strain ATCC BAA-935 / AF2122/97).